We begin with the raw amino-acid sequence, 473 residues long: MPGIVTRFAPSPTGFLHIGGARTALFNWLYAKHHGGRFLLRIEDTDRKRSTQEAIDAIIEGLRWLGMSYDGEIVYQSKRIERHKEVANLLVEKGRAYHCYCPEDEVAEKKAKAREEGKIYKHKCTTKPPSCHPSSRHWKNMWSRAGMTSGVRSVVRFKVPDSQEIVIDDKIYGQIKVNSDQLDDIVILRSDNTPTYIFAVVVDDHDAGITDIIRGSDHLTNTFKHLLIYQALDFDIPRFAHVPLIHGEDGNKLSKRHGATSVCDYEKMGILPKAMRNYLLRLGWSHGNDEIISDEQAIEWFNLESIGRSPARLDFKKLEHLNNHYISNMSNEDILTLMLRENTLTDKKKGYLLQGLTELKKRANYLTELLDLAKFYIQDPPLDLSEEAEQIVKSNLDIIKLLASFLSKIGDENWNKGFLSSQIKECAKLHDMKISDVYHSLRAPITGVMDAPGIIDIMVILGKDECIRRLQAI.

Residues 10-20 (PSPTGFLHIGG) carry the 'HIGH' region motif. The 'KMSKS' region motif lies at 252 to 256 (KLSKR). Residue Lys255 participates in ATP binding.

This sequence belongs to the class-I aminoacyl-tRNA synthetase family. Glutamate--tRNA ligase type 1 subfamily. Monomer.

The protein localises to the cytoplasm. It catalyses the reaction tRNA(Glu) + L-glutamate + ATP = L-glutamyl-tRNA(Glu) + AMP + diphosphate. In terms of biological role, catalyzes the attachment of glutamate to tRNA(Glu) in a two-step reaction: glutamate is first activated by ATP to form Glu-AMP and then transferred to the acceptor end of tRNA(Glu). The chain is Glutamate--tRNA ligase 1 from Wolbachia pipientis wMel.